A 1196-amino-acid polypeptide reads, in one-letter code: Jouberin (1196 aa).

Positions 13 to 45 (KVRFEELLKTHSDLMREKKKLKKKLVRSEENIS) form a coiled coil. Phosphoserine is present on Ser-45. Disordered regions lie at residues 56-186 (MKET…EEDE), 215-242 (QLTYFPSDTLFHDDKLSSEKRKKKKEVP), and 254-327 (ISGD…HEIT). Polar residues predominate over residues 80–91 (DDVSAANTNNLK). Over residues 92-101 (KSTRVTKNKL) the composition is skewed to basic residues. Residues 102–113 (RNTQLATENPNG) show a composition bias toward polar residues. Composition is skewed to basic and acidic residues over residues 141–154 (LKPETPENKVDSTH), 166–179 (DHQKSEKANEGREE), and 224–233 (LFHDDKLSSE). An interaction with HAP1 region spans residues 141-434 (LKPETPENKV…VFNENFPYLL (294 aa)). A compositionally biased stretch (basic residues) spans 300–309 (KPKKTKKKTK). WD repeat units lie at residues 607–649 (AGER…FMRE), 652–691 (GHLNIIYDLSWSKDDHYILTSSSDGTARIWKNEINNTNTF), 695–735 (PHPS…DSAI), 742–781 (VHKSFINSLCFDTEGHHMYSGDCTGVIVVWNTYVKINDLE), 797–837 (EFKG…ARKF), 841–880 (ANYREKIHSTLTPCGTFLFAGSEDGIVYVWNPETGEQVAM), and 885–926 (PFKS…AQQE). Residue Ser-1002 is modified to Phosphoserine. The SH3 domain maps to 1051 to 1111 (DTAPTVVALY…PANHVASETL (61 aa)). The disordered stretch occupies residues 1115–1196 (LPPEIKERSP…QAGRKVTLIE (82 aa)). 2 stretches are compositionally biased toward basic and acidic residues: residues 1117-1136 (PEIKERSPPLSPEEKTKIEK) and 1161-1182 (THSEMRKEQSHEDQGHIMDTRM). At Ser-1123 the chain carries Phosphoserine.

Self-associates. Part of the tectonic-like complex (also named B9 complex). Interacts with MKS1. Interacts with NPHP1; probably as heterodimers and/or AHI1(2):NPHP1(2) heterotetramers. Interacts (via SH3 domain) with the dynamin GTPase DNM2. Interacts with HAP1; probably as AHI1(2):HAP1(2) heterotetramers. Interacts with RAB8A. Interacts with CEND1. Interacts with CTNNB1/beta-catenin. Interacts with SPATA7. Highly expressed in the most primitive normal hematopoietic cells. Expressed in brain, particularly in neurons that give rise to the crossing axons of the corticospinal tract and superior cerebellar peduncles. Expressed in kidney (renal collecting duct cells) (at protein level).

Its subcellular location is the cytoplasm. It is found in the cytoskeleton. The protein localises to the cilium basal body. It localises to the cell junction. The protein resides in the adherens junction. Its subcellular location is the microtubule organizing center. It is found in the centrosome. The protein localises to the centriole. Functionally, involved in vesicle trafficking and required for ciliogenesis, formation of primary non-motile cilium, and recruitment of RAB8A to the basal body of primary cilium. Component of the tectonic-like complex, a complex localized at the transition zone of primary cilia and acting as a barrier that prevents diffusion of transmembrane proteins between the cilia and plasma membranes. Involved in neuronal differentiation. As a positive modulator of classical Wnt signaling, may play a crucial role in ciliary signaling during cerebellum embryonic development. The sequence is that of Jouberin (AHI1) from Homo sapiens (Human).